Consider the following 217-residue polypeptide: Thymidylate kinase (217 aa).

Position 7 to 14 (7 to 14) interacts with ATP; sequence GIEGAGKS.

The protein belongs to the thymidylate kinase family.

It carries out the reaction dTMP + ATP = dTDP + ADP. Functionally, phosphorylation of dTMP to form dTDP in both de novo and salvage pathways of dTTP synthesis. The protein is Thymidylate kinase of Desulfovibrio desulfuricans (strain ATCC 27774 / DSM 6949 / MB).